We begin with the raw amino-acid sequence, 640 residues long: Threonine--tRNA ligase (640 aa).

The TGS domain occupies methionine 1–threonine 61. A catalytic region spans residues aspartate 243 to proline 536. Positions 336, 387, and 513 each coordinate Zn(2+).

The protein belongs to the class-II aminoacyl-tRNA synthetase family. In terms of assembly, homodimer. Zn(2+) is required as a cofactor.

It is found in the cytoplasm. The enzyme catalyses tRNA(Thr) + L-threonine + ATP = L-threonyl-tRNA(Thr) + AMP + diphosphate + H(+). Functionally, catalyzes the attachment of threonine to tRNA(Thr) in a two-step reaction: L-threonine is first activated by ATP to form Thr-AMP and then transferred to the acceptor end of tRNA(Thr). Also edits incorrectly charged L-seryl-tRNA(Thr). The protein is Threonine--tRNA ligase of Acidiphilium cryptum (strain JF-5).